The primary structure comprises 323 residues: NADH-cytochrome b5 reductase 2 (323 aa).

Residues 32-48 form a helical membrane-spanning segment; it reads LAPIYVAVGLTGLGVGL. An FAD-binding FR-type domain is found at 72–177; it reads QGWVDLKLAQ…KGPIPKYPWE (106 aa). 180-215 is an FAD binding site; the sequence is KHKHICLIAGGTGITPMYQLARKIFKDPEDQTKVTL.

Belongs to the flavoprotein pyridine nucleotide cytochrome reductase family. It depends on FAD as a cofactor.

The protein localises to the mitochondrion outer membrane. It carries out the reaction 2 Fe(III)-[cytochrome b5] + NADH = 2 Fe(II)-[cytochrome b5] + NAD(+) + H(+). In terms of biological role, may mediate the reduction of outer membrane cytochrome b5. In Neosartorya fischeri (strain ATCC 1020 / DSM 3700 / CBS 544.65 / FGSC A1164 / JCM 1740 / NRRL 181 / WB 181) (Aspergillus fischerianus), this protein is NADH-cytochrome b5 reductase 2 (mcr1).